We begin with the raw amino-acid sequence, 227 residues long: Germin-like protein subfamily 1 member 3 (227 aa).

The N-terminal stretch at 1–24 (MKYPFQCFLAKIILLALASSFVSC) is a signal peptide. A disulfide bond links Cys34 and Cys50. A Cupin type-1 domain is found at 64–212 (SGLNIPGNTN…AFALDINIVR (149 aa)). Positions 109, 111, and 116 each coordinate Mn(2+). Asn136 carries N-linked (GlcNAc...) asparagine glycosylation. His160 serves as a coordination point for Mn(2+).

Belongs to the germin family. As to quaternary structure, oligomer (believed to be a pentamer but probably hexamer).

Its subcellular location is the secreted. The protein resides in the extracellular space. The protein localises to the apoplast. Functionally, may play a role in plant defense. Probably has no oxalate oxidase activity even if the active site is conserved. The protein is Germin-like protein subfamily 1 member 3 of Arabidopsis thaliana (Mouse-ear cress).